The primary structure comprises 164 residues: Protein SprT (164 aa).

A SprT-like domain is found at 14 to 156 (QLAESFFKRP…LCRRCRNTLV (143 aa)). Residue histidine 69 coordinates Zn(2+). Residue glutamate 70 is part of the active site. A Zn(2+)-binding site is contributed by histidine 73.

This sequence belongs to the SprT family. The cofactor is Zn(2+).

Its subcellular location is the cytoplasm. This is Protein SprT from Pseudomonas fluorescens (strain Pf0-1).